The primary structure comprises 257 residues: UPF0246 protein HAPS_0280 (257 aa).

It belongs to the UPF0246 family.

This chain is UPF0246 protein HAPS_0280, found in Glaesserella parasuis serovar 5 (strain SH0165) (Haemophilus parasuis).